Consider the following 488-residue polypeptide: Protein unzipped (488 aa).

Positions 1–21 (MTSNSCLISLGLLLVLIQILA) are cleaved as a signal peptide. The Extracellular portion of the chain corresponds to 22-465 (PAKAAEHSVF…DVALAGFGVN (444 aa)). Asparagine 35, asparagine 232, asparagine 317, and asparagine 374 each carry an N-linked (GlcNAc...) asparagine glycan. Residues 380–400 (TTTTTTTTSTSTTTHATTTST) show a composition bias toward low complexity. The disordered stretch occupies residues 380 to 453 (TTTTTTTTST…EAPENMSSDP (74 aa)). Residue asparagine 448 is glycosylated (N-linked (GlcNAc...) asparagine). Residues 466–486 (AAGSTFIAGSALLTLLLTIFL) form a helical membrane-spanning segment. Over 487–488 (SL) the chain is Cytoplasmic.

The protein localises to the membrane. Its function is as follows. Required for normal axon patterning during neurogenesis. This is Protein unzipped (uzip) from Drosophila melanogaster (Fruit fly).